The chain runs to 482 residues: G2/mitotic-specific cyclin cdc13 (482 aa).

3 stretches are compositionally biased toward polar residues: residues 35–55 (LHSS…STNV), 78–92 (SKNT…SVST), and 118–140 (SVFN…SVST). Residues 35-140 (LHSSENSLVN…LSTKSHSVST (106 aa)) are disordered. Residues 206-332 (DIFEYLNELE…ILRVLEFNLA (127 aa)) enclose the Cyclin N-terminal domain.

This sequence belongs to the cyclin family. Cyclin AB subfamily. As to quaternary structure, interacts with cdc2. Interacts with rum1. Associates with microtubules. Also interacts with cdc11.

It localises to the nucleus. It is found in the cytoplasm. The protein localises to the cytoskeleton. Its subcellular location is the microtubule organizing center. The protein resides in the spindle pole body. Functionally, essential for the control of the cell cycle at the G2/M (mitosis) transition. Interacts with the cdc2 protein kinase to form MPF. G2/M cyclins accumulate steadily during G2 and are abruptly destroyed at mitosis. Involved in the reorganization of the cytoskeleton on transition from G2 to mitosis. Association with rum1 promotes its proteolysis during G1. Also essential for initiation of meiosis II. The protein is G2/mitotic-specific cyclin cdc13 of Schizosaccharomyces pombe (strain 972 / ATCC 24843) (Fission yeast).